The chain runs to 321 residues: RNA/RNP complex-1-interacting phosphatase (321 aa).

A compositionally biased stretch (basic residues) spans 1 to 11 (MNQHYGRHGRG). Positions 1-27 (MNQHYGRHGRGRGRDFAACAPPKKKGR) are disordered. Residues 60–207 (FEAKLMPEEC…LQKRHVRKNR (148 aa)) enclose the Tyrosine-protein phosphatase domain. Cysteine 151 serves as the catalytic Phosphocysteine intermediate. 152 to 157 (THGLNR) serves as a coordination point for substrate. The Proton donor/acceptor role is filled by arginine 157. Positions 205–262 (KNRNVSAPRTDGLEDSADPTEQVYTNNKPVKKKPRKNRRGGHLAPSQHFQHQTQSSPY) are disordered. A compositionally biased stretch (basic residues) spans 233-245 (PVKKKPRKNRRGG). Over residues 251–262 (QHFQHQTQSSPY) the composition is skewed to polar residues.

It belongs to the protein-tyrosine phosphatase family. Non-receptor class dual specificity subfamily. As to quaternary structure, monomer. May interact with SFRS7 and SFRS9/SRP30C.

It is found in the nucleus. The protein resides in the nucleus speckle. Possesses RNA 5'-triphosphatase and diphosphatase activities, but displays a poor protein-tyrosine phosphatase activity. In addition, has phosphatase activity with ATP, ADP and O-methylfluorescein phosphate (in vitro). Binds to RNA. May participate in nuclear mRNA metabolism. The polypeptide is RNA/RNP complex-1-interacting phosphatase (Dusp11) (Mus musculus (Mouse)).